The chain runs to 474 residues: Myocyte-specific enhancer factor 2C (474 aa).

In terms of domain architecture, MADS-box spans 3 to 57 (RKKIQITRIMDERNRQVTFTKRKFGLMKKAYELSVLCDCEIALIIFNSTNKLFQY). Lys4 is subject to N6-acetyllysine. The mef2-type DNA-binding region spans 58 to 86 (ASTDMDKVLLKYTEYNEPHESRTNSDIVE). Ser59 carries the phosphoserine; by CK2 modification. The segment at 91-118 (KGLNGCDSPDPDADDSVGHSPESEDKYR) is disordered. 2 positions are modified to phosphoserine: Ser98 and Ser106. A Phosphothreonine modification is found at Gly108. A Phosphoserine modification is found at Ser110. N6-acetyllysine occurs at positions 116 and 119. Phosphoserine occurs at positions 222 and 228. An N6-acetyllysine mark is found at Lys234 and Lys239. Position 240 is a phosphoserine (Ser240). Residues Lys252 and Lys264 each carry the N6-acetyllysine modification. The interval 271 to 278 (SEDVDLLL) is beta domain. 2 positions are modified to phosphothreonine; by MAPK14: Thr293 and Thr300. The interval 368-399 (ACTSTHLSQSSNLSLPSTQSLSIKSEPVSPPR) is transcription repressor. The segment covering 375-390 (SQSSNLSLPSTQSLSI) has biased composition (polar residues). A disordered region spans residues 375–474 (SQSSNLSLPS…RMRLSEGWAT (100 aa)). Residue Lys391 forms a Glycyl lysine isopeptide (Lys-Gly) (interchain with G-Cter in SUMO) linkage. Position 396 is a phosphoserine; by CDK5 (Ser396). A Phosphoserine; by MAPK7 modification is found at Ser420. Residues 420–433 (SPVDSLSSCSSSYD) show a composition bias toward low complexity. Basic and acidic residues predominate over residues 434–444 (GSDREDHRNEF). The residue at position 446 (Ser446) is a Phosphoserine.

It belongs to the MEF2 family. Forms a complex with class II HDACs in undifferentiating cells. On myogenic differentiation, HDACs are released into the cytoplasm allowing MEF2s to interact with other proteins for activation. Interacts with EP300 in differentiating cells; the interaction acetylates MEF2C leading to increased DNA binding and activation. Interacts with HDAC7 and CARM1. Interacts with HDAC4, HDAC7 AND HDAC9; the interaction with HDACs represses transcriptional activity. Interacts with LPIN1. Interacts with MYOCD. Interacts with AKAP13. Interacts with FOXK1; the interaction inhibits MEF2C transactivation activity. Interacts (via N-terminus) with HABP4; this interaction decreases DNA-binding activity of MEF2C in myocardial cells in response to mechanical stress. Interacts with JPH2; interaction specifically takes place with the Junctophilin-2 N-terminal fragment cleavage product of JPH2. Interacts (via MADS box) with SOX18. Interacts with PHF7; the interaction promotes MEF2C binding to its transcription targets. Phosphorylation on Ser-59 enhances DNA binding activity. Phosphorylation on Ser-396 is required for Lys-391 sumoylation and inhibits transcriptional activity. In terms of processing, acetylated by p300 on several sites in diffentiating myocytes. Acetylation on Lys-4 increases DNA binding and transactivation. Post-translationally, sumoylated on Lys-391 with SUMO2 but not by SUMO1 represses transcriptional activity. Proteolytically cleaved in cerebellar granule neurons, probably by caspase 7, following neurotoxicity. Preferentially cleaves the CDK5-mediated hyperphosphorylated form which leads to neuron apoptosis and transcriptional inactivation. Widely expressed though mainly restricted to skeletal and cardiac muscle, brain, neurons and lymphocytes. Beta domain-lacking isoforms are the most predominantly expressed in all tissues including skeletal and cardiac muscle and brain. Only brain expresses all isoforms. Expression occurs primarily in the internal granule cell layer of the olfactory bulb, cortex, thalamus, hippocampus and cerebellum. Low levels in the cerebellum and hindbrain. Expressed throughout the cortex, including the frontal and entorhinal cortex, dentate gyrus, and basolateral amygdala. Selectively expressed in B-cells but not in T-cells, and its expression increases as B-cells mature.

The protein resides in the nucleus. Its subcellular location is the cytoplasm. It is found in the sarcoplasm. In terms of biological role, transcription activator which binds specifically to the MEF2 element present in the regulatory regions of many muscle-specific genes. Controls cardiac morphogenesis and myogenesis, and is also involved in vascular development. Enhances transcriptional activation mediated by SOX18. May also be involved in neurogenesis and in the development of cortical architecture. Isoforms that lack the repressor domain are more active than isoform 1. Plays an essential role in hippocampal-dependent learning and memory by suppressing the number of excitatory synapses and thus regulating basal and evoked synaptic transmission. Crucial for normal neuronal development, distribution, and electrical activity in the neocortex. Necessary for proper development of megakaryocytes and platelets and for bone marrow B-lymphopoiesis. Required for B-cell survival and proliferation in response to BCR stimulation, efficient IgG1 antibody responses to T-cell-dependent antigens and for normal induction of germinal center B-cells. The chain is Myocyte-specific enhancer factor 2C from Mus musculus (Mouse).